Consider the following 798-residue polypeptide: Protocadherin beta-14 (798 aa).

An N-terminal signal peptide occupies residues 1-26; that stretch reads MEIRGALDLRKRQVLIFLVLLGLSRA. Residues 27-686 lie on the Extracellular side of the membrane; sequence GTESAHYSVA…APAQAQADSL (660 aa). Cadherin domains are found at residues 35–133, 138–242, 247–347, 352–451, and 456–561; these read VAEE…SPTF, ILIK…APEF, YEVQ…PPEV, ITKR…APTF, and YTLF…SPFV. C96 and C102 are joined by a disulfide. N-linked (GlcNAc...) asparagine glycosylation occurs at N169. N359, N418, N436, N487, and N567 each carry an N-linked (GlcNAc...) asparagine glycan. Residues 568–671 enclose the Cadherin 6 domain; it reads GSAPCTELVP…LVDGFSQPYL (104 aa). Residues 687–711 form a helical membrane-spanning segment; it reads TVYLVVALASVSSLFLFSVLLFVAV. Residues 712 to 798 lie on the Cytoplasmic side of the membrane; sequence RLCRRSRAAS…FRNSFGLNIQ (87 aa).

Its subcellular location is the cell membrane. Potential calcium-dependent cell-adhesion protein. May be involved in the establishment and maintenance of specific neuronal connections in the brain. This Homo sapiens (Human) protein is Protocadherin beta-14 (PCDHB14).